A 263-amino-acid polypeptide reads, in one-letter code: Imidazole glycerol phosphate synthase subunit HisF (263 aa).

Catalysis depends on residues Asp-11 and Asp-130.

Belongs to the HisA/HisF family. In terms of assembly, heterodimer of HisH and HisF.

It localises to the cytoplasm. The enzyme catalyses 5-[(5-phospho-1-deoxy-D-ribulos-1-ylimino)methylamino]-1-(5-phospho-beta-D-ribosyl)imidazole-4-carboxamide + L-glutamine = D-erythro-1-(imidazol-4-yl)glycerol 3-phosphate + 5-amino-1-(5-phospho-beta-D-ribosyl)imidazole-4-carboxamide + L-glutamate + H(+). The protein operates within amino-acid biosynthesis; L-histidine biosynthesis; L-histidine from 5-phospho-alpha-D-ribose 1-diphosphate: step 5/9. Functionally, IGPS catalyzes the conversion of PRFAR and glutamine to IGP, AICAR and glutamate. The HisF subunit catalyzes the cyclization activity that produces IGP and AICAR from PRFAR using the ammonia provided by the HisH subunit. This Synechococcus sp. (strain CC9311) protein is Imidazole glycerol phosphate synthase subunit HisF.